The following is a 549-amino-acid chain: Probable protein kinase UbiB (549 aa).

Positions 123 to 501 constitute a Protein kinase domain; sequence DFEDTPLASA…QQKAHKSNYL (379 aa). Residues 129-137 and Lys-152 each bind ATP; that span reads LASASISQV. The active-site Proton acceptor is Asp-287. Transmembrane regions (helical) follow at residues 498–518 and 520–540; these read SNYL…LLNQ and ATLW…VLGW.

It belongs to the ABC1 family. UbiB subfamily.

Its subcellular location is the cell inner membrane. It participates in cofactor biosynthesis; ubiquinone biosynthesis [regulation]. Its function is as follows. Is probably a protein kinase regulator of UbiI activity which is involved in aerobic coenzyme Q (ubiquinone) biosynthesis. The protein is Probable protein kinase UbiB of Shewanella piezotolerans (strain WP3 / JCM 13877).